Consider the following 86-residue polypeptide: uncharacterized protein (86 aa).

TPR repeat units lie at residues 8–41 (AEYY…NPFY) and 42–75 (RDAW…EKHL).

This is an uncharacterized protein from Methanocaldococcus jannaschii (strain ATCC 43067 / DSM 2661 / JAL-1 / JCM 10045 / NBRC 100440) (Methanococcus jannaschii).